A 190-amino-acid chain; its full sequence is Shikimate kinase (190 aa).

Residue 15 to 20 (GSGKST) participates in ATP binding. Ser19 contributes to the Mg(2+) binding site. 3 residues coordinate substrate: Asp37, Arg61, and Gly83. Residue Arg121 coordinates ATP. Residue Arg148 participates in substrate binding.

It belongs to the shikimate kinase family. As to quaternary structure, monomer. Requires Mg(2+) as cofactor.

The protein resides in the cytoplasm. It carries out the reaction shikimate + ATP = 3-phosphoshikimate + ADP + H(+). It functions in the pathway metabolic intermediate biosynthesis; chorismate biosynthesis; chorismate from D-erythrose 4-phosphate and phosphoenolpyruvate: step 5/7. Functionally, catalyzes the specific phosphorylation of the 3-hydroxyl group of shikimic acid using ATP as a cosubstrate. This Chlorobium chlorochromatii (strain CaD3) protein is Shikimate kinase.